Reading from the N-terminus, the 240-residue chain is MPTLGVNIDHVATIRQARQTVEPDPVAAAVLAELAGADGITVHLREDRRHIQERDVHILRQTVQTHLNLEMAPTDEMVAIALEIKPDYITLVPERREEVTTEGGLDVAGNLSQMRKVVAQLQGVGIPVSMFIDPERLQIEASAQIEAKFIELHTGSYAEAKNEATRHKELTILADGCNIAINHGLRVNAGHGLTYENVYSVACLKGMEELNIGHTIVSKAVLVGMERAVREMKLAINGKF.

Asparagine 7 contributes to the 3-amino-2-oxopropyl phosphate binding site. 9–10 (DH) contributes to the 1-deoxy-D-xylulose 5-phosphate binding site. Arginine 18 provides a ligand contact to 3-amino-2-oxopropyl phosphate. The active-site Proton acceptor is the histidine 43. Positions 45 and 50 each coordinate 1-deoxy-D-xylulose 5-phosphate. The active-site Proton acceptor is glutamate 70. Threonine 100 provides a ligand contact to 1-deoxy-D-xylulose 5-phosphate. Histidine 191 (proton donor) is an active-site residue. 3-amino-2-oxopropyl phosphate-binding positions include glycine 192 and 213 to 214 (GH).

It belongs to the PNP synthase family. As to quaternary structure, homooctamer; tetramer of dimers.

The protein localises to the cytoplasm. It carries out the reaction 3-amino-2-oxopropyl phosphate + 1-deoxy-D-xylulose 5-phosphate = pyridoxine 5'-phosphate + phosphate + 2 H2O + H(+). It participates in cofactor biosynthesis; pyridoxine 5'-phosphate biosynthesis; pyridoxine 5'-phosphate from D-erythrose 4-phosphate: step 5/5. Functionally, catalyzes the complicated ring closure reaction between the two acyclic compounds 1-deoxy-D-xylulose-5-phosphate (DXP) and 3-amino-2-oxopropyl phosphate (1-amino-acetone-3-phosphate or AAP) to form pyridoxine 5'-phosphate (PNP) and inorganic phosphate. The polypeptide is Pyridoxine 5'-phosphate synthase (Trichodesmium erythraeum (strain IMS101)).